The sequence spans 167 residues: Beta-3 adrenergic receptor (167 aa).

Residues 1 to 25 (RVGADAEAQECHSNPRCCSFASNMP) are Extracellular-facing. C11 and C17 form a disulfide bridge. The helical transmembrane segment at 26 to 47 (YALLSSSVSFYLPLLVMLFVYA) threads the bilayer. Residues 48–114 (RVFVVAKRQR…LPLREHRALR (67 aa)) are Cytoplasmic-facing. Positions 66-97 (RFPPEESPRSPSRSPSPVAGGTGEAPDGVPSC) are disordered. Residues 115 to 136 (TLGLIMGIFSLCWLPFFLANVL) traverse the membrane as a helical segment. Residues 137–148 (RALAGPSIVPNG) lie on the Extracellular side of the membrane. The chain crosses the membrane as a helical span at residues 149 to 167 (VFIALNWLGYANSAFNPLI).

This sequence belongs to the G-protein coupled receptor 1 family. Adrenergic receptor subfamily. ADRB3 sub-subfamily. Interacts with ARRDC3.

It is found in the cell membrane. Its function is as follows. Beta-adrenergic receptors mediate the catecholamine-induced activation of adenylate cyclase through the action of G proteins. Beta-3 is involved in the regulation of lipolysis and thermogenesis. In Meriones unguiculatus (Mongolian jird), this protein is Beta-3 adrenergic receptor (ADRB3).